A 240-amino-acid chain; its full sequence is tRNA (guanine-N(7)-)-methyltransferase (240 aa).

Polar residues predominate over residues 1-10; that stretch reads MTESQDTPIT. The segment at 1 to 20 is disordered; sequence MTESQDTPITTDGEARPHRR. Positions 70, 95, 122, and 145 each coordinate S-adenosyl-L-methionine. Asp-145 is an active-site residue. Residues Lys-149, Asp-181, and 218–221 contribute to the substrate site; that span reads TKFE.

It belongs to the class I-like SAM-binding methyltransferase superfamily. TrmB family.

The enzyme catalyses guanosine(46) in tRNA + S-adenosyl-L-methionine = N(7)-methylguanosine(46) in tRNA + S-adenosyl-L-homocysteine. It participates in tRNA modification; N(7)-methylguanine-tRNA biosynthesis. Functionally, catalyzes the formation of N(7)-methylguanine at position 46 (m7G46) in tRNA. The protein is tRNA (guanine-N(7)-)-methyltransferase of Pseudomonas putida (strain W619).